The chain runs to 199 residues: UPF0056 membrane protein bbp_399 (199 aa).

6 consecutive transmembrane segments (helical) span residues 7 to 29, 39 to 58, 71 to 93, 108 to 130, 137 to 156, and 176 to 198; these read VTILLILIMDPLGNLPIFMSILK, ILIREMMIALLIMLLFLFAG, TVSVSGGIILFLIAIKMIFPTYE, FLVPLAIPLVAGPSLLATLMLLS, ILYLIGSLLIAWMITVVILL, and LMGLILIMLSTQMFLDGIKSWFY.

This sequence belongs to the UPF0056 (MarC) family.

Its subcellular location is the cell membrane. The chain is UPF0056 membrane protein bbp_399 from Buchnera aphidicola subsp. Baizongia pistaciae (strain Bp).